A 119-amino-acid chain; its full sequence is Ribosome-binding factor A (119 aa).

This sequence belongs to the RbfA family. In terms of assembly, monomer. Binds 30S ribosomal subunits, but not 50S ribosomal subunits or 70S ribosomes.

The protein localises to the cytoplasm. In terms of biological role, one of several proteins that assist in the late maturation steps of the functional core of the 30S ribosomal subunit. Associates with free 30S ribosomal subunits (but not with 30S subunits that are part of 70S ribosomes or polysomes). Required for efficient processing of 16S rRNA. May interact with the 5'-terminal helix region of 16S rRNA. The polypeptide is Ribosome-binding factor A (Wolinella succinogenes (strain ATCC 29543 / DSM 1740 / CCUG 13145 / JCM 31913 / LMG 7466 / NCTC 11488 / FDC 602W) (Vibrio succinogenes)).